The sequence spans 379 residues: Cytochrome b (379 aa).

The next 4 helical transmembrane spans lie at 33–53, 77–98, 113–133, and 178–198; these read FGSL…FLAM, WLIR…FIHV, WNIG…GYVL, and FFAF…VHLL. 2 residues coordinate heme b: His-83 and His-97. Positions 182 and 196 each coordinate heme b. Residue His-201 coordinates a ubiquinone. 4 helical membrane-spanning segments follow: residues 226-246, 288-308, 320-340, and 347-367; these read TKDL…ALFF, LGGV…PLLN, VTQV…WIGG, and FTMI…ILIP.

It belongs to the cytochrome b family. As to quaternary structure, the cytochrome bc1 complex contains 11 subunits: 3 respiratory subunits (MT-CYB, CYC1 and UQCRFS1), 2 core proteins (UQCRC1 and UQCRC2) and 6 low-molecular weight proteins (UQCRH/QCR6, UQCRB/QCR7, UQCRQ/QCR8, UQCR10/QCR9, UQCR11/QCR10 and a cleavage product of UQCRFS1). This cytochrome bc1 complex then forms a dimer. Heme b serves as cofactor.

It is found in the mitochondrion inner membrane. Functionally, component of the ubiquinol-cytochrome c reductase complex (complex III or cytochrome b-c1 complex) that is part of the mitochondrial respiratory chain. The b-c1 complex mediates electron transfer from ubiquinol to cytochrome c. Contributes to the generation of a proton gradient across the mitochondrial membrane that is then used for ATP synthesis. The protein is Cytochrome b (MT-CYB) of Akodon lutescens puer (Altiplano grass mouse).